Consider the following 778-residue polypeptide: Lon protease (778 aa).

The Lon N-terminal domain occupies 8-202; the sequence is LPLIPLRGLI…NVLTVIKDEL (195 aa). 354 to 361 lines the ATP pocket; sequence GPPGVGKT. Residues 591-772 enclose the Lon proteolytic domain; the sequence is EDKIGVVTGM…DTVLENALIG (182 aa). Catalysis depends on residues Ser678 and Lys721.

Belongs to the peptidase S16 family. In terms of assembly, homohexamer. Organized in a ring with a central cavity.

It is found in the cytoplasm. The catalysed reaction is Hydrolysis of proteins in presence of ATP.. Its function is as follows. ATP-dependent serine protease that mediates the selective degradation of mutant and abnormal proteins as well as certain short-lived regulatory proteins. Required for cellular homeostasis and for survival from DNA damage and developmental changes induced by stress. Degrades polypeptides processively to yield small peptide fragments that are 5 to 10 amino acids long. Binds to DNA in a double-stranded, site-specific manner. In Clostridium acetobutylicum (strain ATCC 824 / DSM 792 / JCM 1419 / IAM 19013 / LMG 5710 / NBRC 13948 / NRRL B-527 / VKM B-1787 / 2291 / W), this protein is Lon protease.